The following is a 212-amino-acid chain: Regulatory protein RecX (212 aa).

Belongs to the RecX family.

Its subcellular location is the cytoplasm. Modulates RecA activity. The protein is Regulatory protein RecX of Clostridioides difficile (strain 630) (Peptoclostridium difficile).